A 91-amino-acid polypeptide reads, in one-letter code: Defensin-like protein 269 (91 aa).

An N-terminal signal peptide occupies residues 1 to 25 (MAVSKTTMLIVLVAIILSCVSISNA). 4 cysteine pairs are disulfide-bonded: C41–C82, C53–C72, C59–C77, and C63–C79.

It belongs to the DEFL family.

It localises to the secreted. This chain is Defensin-like protein 269, found in Arabidopsis thaliana (Mouse-ear cress).